Here is a 261-residue protein sequence, read N- to C-terminus: Matrix metalloproteinase-26 (261 aa).

An N-terminal signal peptide occupies residues 1-17; sequence MQLVILRVTIFLPWCFA. Positions 18-89 are excised as a propeptide; that stretch reads VPVPPAADHK…PHCGVPDGSD (72 aa). Asn64 carries an N-linked (GlcNAc...) asparagine glycan. Residues 80-87 carry the Cysteine switch motif; sequence PHCGVPDG. Zn(2+) contacts are provided by Cys82 and His208. Glu209 is an active-site residue. His212 and His218 together coordinate Zn(2+). N-linked (GlcNAc...) asparagine glycosylation occurs at Asn221.

It belongs to the peptidase M10A family. The cofactor is Zn(2+). Ca(2+) is required as a cofactor. In terms of tissue distribution, expressed specifically in uterus and placenta. Is also widely expressed in malignant tumors from different sources as well as in diverse tumor cell lines.

Its subcellular location is the secreted. The protein localises to the extracellular space. It localises to the extracellular matrix. In terms of biological role, may hydrolyze collagen type IV, fibronectin, fibrinogen, beta-casein, type I gelatin and alpha-1 proteinase inhibitor. Is also able to activate progelatinase B. This Homo sapiens (Human) protein is Matrix metalloproteinase-26 (MMP26).